Here is a 95-residue protein sequence, read N- to C-terminus: MGPSRLVRGPRPQGMRSPYRRPGMGWPRPRFPRMFKCSRRRYQQGLRGRTASSAAINPATRAMGINNTHTDTTIVWIFPPQVLRHLRQPGIFLIL.

The segment at 1 to 27 is disordered; sequence MGPSRLVRGPRPQGMRSPYRRPGMGWP.

The chain is PIK3R3 upstream open reading frame protein from Homo sapiens (Human).